The sequence spans 28 residues: fur leader peptide (28 aa).

Cotranscribed with fur, it is essential for fur translation. The fur ribosomal binding site (RBS) is occluded by the 5'-mRNA secondary structure, which is opened by uof translation. The polypeptide is fur leader peptide (uof) (Escherichia coli (strain K12)).